The following is a 58-amino-acid chain: Succinate dehydrogenase subunit 8B, mitochondrial (58 aa).

As to quaternary structure, component of complex II composed of eight subunits in plants: four classical SDH subunits SDH1, SDH2, SDH3 and SDH4 (a flavoprotein (FP), an iron-sulfur protein (IP), and a cytochrome b composed of a large and a small subunit.), as well as four subunits unknown in mitochondria from bacteria and heterotrophic eukaryotes.

It is found in the mitochondrion inner membrane. It participates in carbohydrate metabolism; tricarboxylic acid cycle. The sequence is that of Succinate dehydrogenase subunit 8B, mitochondrial from Oryza sativa subsp. japonica (Rice).